Consider the following 466-residue polypeptide: Voltage-gated potassium channel regulatory subunit KCNG2 (466 aa).

Topologically, residues 1–174 (MEPWPCSPGG…DVVDNPHSGL (174 aa)) are cytoplasmic. Residues 131-155 (AEARAGPTERGAQGSPARALGPRGR) are disordered. The helical transmembrane segment at 175–196 (AGKLFACVSVSFVAVTAVGLCL) threads the bilayer. The Extracellular segment spans residues 197–217 (STMPDIRAEEERGECSPKCRS). The helical transmembrane segment at 218 to 239 (LFVLETVCVAWFSFEFLLRSLQ) threads the bilayer. The Cytoplasmic segment spans residues 240-250 (AESKCAFLRAP). A helical membrane pass occupies residues 251 to 271 (LNIIDILALLPFYVSLLLGLA). Over 272–283 (AGPGGTKLLERA) the chain is Extracellular. A helical; Voltage-sensor membrane pass occupies residues 284-304 (GLVLRLLRALRVLYVMRLARH). Over 305-319 (SLGLRSLGLTMRRCA) the chain is Cytoplasmic. Residues 320–341 (REFGLLLLFLCVAMALFAPLVH) traverse the membrane as a helical segment. The Extracellular segment spans residues 342-356 (LAERELGARRDFSSV). Positions 357–368 (PASYWWAVISMT) form an intramembrane region, helical. The short motif at 369–374 (TVGYGD) is the Selectivity filter element. The stretch at 369–376 (TVGYGDMV) is an intramembrane region. Topologically, residues 377-383 (PRSLPGQ) are extracellular. A helical transmembrane segment spans residues 384-412 (VVALSSILSGILLMAFPVTSIFHTFSRSY). Over 413 to 466 (SELKEQQQRAASPEPALQEDSTHSATATEDSSQGPDSAGLADDSADALWVRAGR) the chain is Cytoplasmic. Positions 416–466 (KEQQQRAASPEPALQEDSTHSATATEDSSQGPDSAGLADDSADALWVRAGR) are disordered. Positions 435 to 447 (HSATATEDSSQGP) are enriched in polar residues. Over residues 448-460 (DSAGLADDSADAL) the composition is skewed to low complexity.

This sequence belongs to the potassium channel family. G (TC 1.A.1.2) subfamily. Kv6.2/KCNG2 sub-subfamily. In terms of assembly, heterodimer with KCNB1. As to expression, highly expressed in heart, liver, skeletal muscle, kidney and pancreas. Detected at low levels in brain, lung and placenta.

The protein localises to the cell membrane. Regulatory alpha-subunit of the voltage-gated potassium (Kv) channel which, when coassembled with KCNB1, can modulate the kinetics and conductance-voltage relationship. Modulates channel activity by shifting the threshold and the half-maximal activation to more negative values. Potassium channel subunit that does not form functional channels by itself. This chain is Voltage-gated potassium channel regulatory subunit KCNG2, found in Homo sapiens (Human).